Here is a 261-residue protein sequence, read N- to C-terminus: Endonuclease NucS (261 aa).

It belongs to the NucS endonuclease family.

The protein resides in the cytoplasm. Functionally, cleaves both 3' and 5' ssDNA extremities of branched DNA structures. This is Endonuclease NucS from Aeropyrum pernix (strain ATCC 700893 / DSM 11879 / JCM 9820 / NBRC 100138 / K1).